We begin with the raw amino-acid sequence, 187 residues long: Putative type I specificity subunit S.MpnORF289P N-terminus (187 aa).

Belongs to the type-I restriction system S methylase family. In terms of assembly, the methyltransferase is composed of M and S polypeptides.

The N-terminal section of a specificity (S) subunit of a type I methyltransferase (MTase); this subunit dictates DNA sequence specificity. The single R subunit has multiple frameshifts and is probably not expressed. This is Putative type I specificity subunit S.MpnORF289P N-terminus from Mycoplasma pneumoniae (strain ATCC 29342 / M129 / Subtype 1) (Mycoplasmoides pneumoniae).